Reading from the N-terminus, the 398-residue chain is Phosphoglycerate kinase (398 aa).

Substrate is bound by residues 22-24 (DFN), arginine 38, 61-64 (HLGR), arginine 120, and arginine 153. ATP contacts are provided by residues lysine 204, glutamate 326, and 352-355 (GGDT).

This sequence belongs to the phosphoglycerate kinase family. As to quaternary structure, monomer.

The protein localises to the cytoplasm. It catalyses the reaction (2R)-3-phosphoglycerate + ATP = (2R)-3-phospho-glyceroyl phosphate + ADP. The protein operates within carbohydrate degradation; glycolysis; pyruvate from D-glyceraldehyde 3-phosphate: step 2/5. The chain is Phosphoglycerate kinase from Geobacter metallireducens (strain ATCC 53774 / DSM 7210 / GS-15).